The following is a 279-amino-acid chain: Uroplakin-3b (279 aa).

The N-terminal stretch at 1-26 is a signal peptide; that stretch reads MGLPSRQPRLWLLLLVVLGWPQPCLT. Residues 27 to 200 are Lumenal-facing; the sequence is LDLIPYTPRI…DTWPGRRSGD (174 aa). N-linked (GlcNAc...) asparagine glycosylation occurs at asparagine 77. The helical transmembrane segment at 201–221 threads the bilayer; the sequence is MIIITSILSSLAGLLLLAFLA. Topologically, residues 222–279 are cytoplasmic; the sequence is ASSVRFSSLWWPEEAPEQLRIGSFMGKRYMTHHIPPSEAATLPVGCEPGLERFPSLSP.

The protein belongs to the uroplakin-3 family. In terms of assembly, heterodimer with uroplakin-1B (UPK1B). In terms of tissue distribution, expression is urothelium-specific.

Its subcellular location is the cell membrane. Functionally, component of the asymmetric unit membrane (AUM); a highly specialized biomembrane elaborated by terminally differentiated urothelial cells. May play an important role in AUM-cytoskeleton interaction in terminally differentiated urothelial cells. It also contributes to the formation of urothelial glycocalyx which may play an important role in preventing bacterial adherence. In Bos taurus (Bovine), this protein is Uroplakin-3b (UPK3B).